The chain runs to 236 residues: Purine nucleoside phosphorylase DeoD-type (236 aa).

His-4 is an a purine D-ribonucleoside binding site. Residues Gly-20, Arg-24, Arg-43, and 87–90 contribute to the phosphate site; that span reads RVGT. Residues 179 to 181 and 203 to 204 each bind a purine D-ribonucleoside; these read EME and SD. Asp-204 serves as the catalytic Proton donor.

The protein belongs to the PNP/UDP phosphorylase family. As to quaternary structure, homohexamer; trimer of homodimers.

The enzyme catalyses a purine D-ribonucleoside + phosphate = a purine nucleobase + alpha-D-ribose 1-phosphate. It catalyses the reaction a purine 2'-deoxy-D-ribonucleoside + phosphate = a purine nucleobase + 2-deoxy-alpha-D-ribose 1-phosphate. Its function is as follows. Catalyzes the reversible phosphorolytic breakdown of the N-glycosidic bond in the beta-(deoxy)ribonucleoside molecules, with the formation of the corresponding free purine bases and pentose-1-phosphate. The protein is Purine nucleoside phosphorylase DeoD-type of Streptococcus thermophilus (strain ATCC BAA-491 / LMD-9).